A 105-amino-acid polypeptide reads, in one-letter code: Large ribosomal subunit protein uL24 (105 aa).

Belongs to the universal ribosomal protein uL24 family. As to quaternary structure, part of the 50S ribosomal subunit.

Functionally, one of two assembly initiator proteins, it binds directly to the 5'-end of the 23S rRNA, where it nucleates assembly of the 50S subunit. One of the proteins that surrounds the polypeptide exit tunnel on the outside of the subunit. The protein is Large ribosomal subunit protein uL24 of Vibrio parahaemolyticus serotype O3:K6 (strain RIMD 2210633).